The chain runs to 188 residues: HTH-type transcriptional repressor AcnR (188 aa).

Residues 10 to 70 form the HTH tetR-type domain; it reads VNSRQEILEG…ALAREDAARM (61 aa). Residues 33-52 constitute a DNA-binding region (H-T-H motif); it reads TVRRLEEATGKSRGAIFHHF. Citrate-binding positions include 79-80, R130, and N134; that span reads LV. Residue E181 coordinates Mg(2+). Residue R185 coordinates citrate.

Homodimer.

Its function is as follows. AcnR negatively controls the expression of the aconitase gene acn. In Corynebacterium efficiens (strain DSM 44549 / YS-314 / AJ 12310 / JCM 11189 / NBRC 100395), this protein is HTH-type transcriptional repressor AcnR.